We begin with the raw amino-acid sequence, 529 residues long: Bifunctional purine biosynthesis protein PurH (529 aa).

Residues 1-148 form the MGS-like domain; the sequence is MQQRRPVRRA…KNHKDVAIVV (148 aa).

Belongs to the PurH family.

The enzyme catalyses (6R)-10-formyltetrahydrofolate + 5-amino-1-(5-phospho-beta-D-ribosyl)imidazole-4-carboxamide = 5-formamido-1-(5-phospho-D-ribosyl)imidazole-4-carboxamide + (6S)-5,6,7,8-tetrahydrofolate. It carries out the reaction IMP + H2O = 5-formamido-1-(5-phospho-D-ribosyl)imidazole-4-carboxamide. It participates in purine metabolism; IMP biosynthesis via de novo pathway; 5-formamido-1-(5-phospho-D-ribosyl)imidazole-4-carboxamide from 5-amino-1-(5-phospho-D-ribosyl)imidazole-4-carboxamide (10-formyl THF route): step 1/1. The protein operates within purine metabolism; IMP biosynthesis via de novo pathway; IMP from 5-formamido-1-(5-phospho-D-ribosyl)imidazole-4-carboxamide: step 1/1. The chain is Bifunctional purine biosynthesis protein PurH from Klebsiella pneumoniae (strain 342).